The sequence spans 237 residues: Oil body-associated protein 2C (237 aa).

The protein belongs to the OBAP family.

In Arabidopsis thaliana (Mouse-ear cress), this protein is Oil body-associated protein 2C.